Consider the following 118-residue polypeptide: MKKELLEVFDNQFPDRDYTIEIVNPEFTSVCPKTGLPDFGTITLRYVPDKVCIELKSLKYYYLEFRNAGIFYENITNTILDHMISALHPRTLTVTTEWKARGGITETVTASYSSADKA.

Cys31 functions as the Thioimide intermediate in the catalytic mechanism. Asp38 (proton donor) is an active-site residue. Substrate-binding positions include 53-55 (IEL) and 72-73 (YE).

Belongs to the GTP cyclohydrolase I family. QueF type 1 subfamily.

It is found in the cytoplasm. It catalyses the reaction 7-aminomethyl-7-carbaguanine + 2 NADP(+) = 7-cyano-7-deazaguanine + 2 NADPH + 3 H(+). The protein operates within tRNA modification; tRNA-queuosine biosynthesis. In terms of biological role, catalyzes the NADPH-dependent reduction of 7-cyano-7-deazaguanine (preQ0) to 7-aminomethyl-7-deazaguanine (preQ1). This Prosthecochloris aestuarii (strain DSM 271 / SK 413) protein is NADPH-dependent 7-cyano-7-deazaguanine reductase.